The following is a 46-amino-acid chain: VNSNYTGGEPKRSRTAYTRQQVLELEKEFLFNRYLTRRRRIQHTLT.

Residues 1–46 constitute a DNA-binding region (homeobox); the sequence is VNSNYTGGEPKRSRTAYTRQQVLELEKEFLFNRYLTRRRRIQHTLT.

This sequence belongs to the Antp homeobox family. Deformed subfamily. Forms a DNA-binding heterodimer with transcription factor PBX1.

It is found in the nucleus. In terms of biological role, sequence-specific transcription factor which is part of a developmental regulatory system that provides cells with specific positional identities on the anterior-posterior axis. This Ovis aries (Sheep) protein is Homeobox protein Hox-D4 (HOXD4).